Consider the following 192-residue polypeptide: I-Kappa-B like protein H1 (192 aa).

ANK repeat units lie at residues 94–126, 131–161, and 165–192; these read KGAQ…DING, AGLT…DVKV, and GKET…SKKM.

It belongs to the polydnaviridae I-Kappa-B-like protein family.

Functionally, suppresses the host immune response through NF-kappa-B inactivation. Possesses ankyrin repeat domains required for NF-kappa-B binding but lacks the regulatory regions required for dissociation from NF-kappa-B and degradation. Therefore, prevents host NF-kappa-B release and subsequent activation. This Microplitis demolitor bracovirus (isolate Webb) (MdBV) protein is I-Kappa-B like protein H1 (H4).